A 180-amino-acid chain; its full sequence is ATP synthase subunit b 2 (180 aa).

A helical membrane pass occupies residues 33–53; the sequence is IFWLLVTLVAIYFLLTRVALP.

The protein belongs to the ATPase B chain family. F-type ATPases have 2 components, F(1) - the catalytic core - and F(0) - the membrane proton channel. F(1) has five subunits: alpha(3), beta(3), gamma(1), delta(1), epsilon(1). F(0) has three main subunits: a(1), b(2) and c(10-14). The alpha and beta chains form an alternating ring which encloses part of the gamma chain. F(1) is attached to F(0) by a central stalk formed by the gamma and epsilon chains, while a peripheral stalk is formed by the delta and b chains.

The protein resides in the cell inner membrane. In terms of biological role, f(1)F(0) ATP synthase produces ATP from ADP in the presence of a proton or sodium gradient. F-type ATPases consist of two structural domains, F(1) containing the extramembraneous catalytic core and F(0) containing the membrane proton channel, linked together by a central stalk and a peripheral stalk. During catalysis, ATP synthesis in the catalytic domain of F(1) is coupled via a rotary mechanism of the central stalk subunits to proton translocation. Functionally, component of the F(0) channel, it forms part of the peripheral stalk, linking F(1) to F(0). The b'-subunit is a diverged and duplicated form of b found in plants and photosynthetic bacteria. This is ATP synthase subunit b 2 (atpF2) from Cereibacter sphaeroides (strain ATCC 17029 / ATH 2.4.9) (Rhodobacter sphaeroides).